A 239-amino-acid polypeptide reads, in one-letter code: Sugar fermentation stimulation protein homolog (239 aa).

It belongs to the SfsA family.

This Rhizobium meliloti (strain 1021) (Ensifer meliloti) protein is Sugar fermentation stimulation protein homolog.